We begin with the raw amino-acid sequence, 374 residues long: Protein dip1 (374 aa).

This sequence belongs to the LDB17 family.

The protein localises to the cytoplasm. The protein resides in the nucleus. It localises to the cell tip. Its function is as follows. May be involved in protein-linked oligosaccharide phosphorylation. The chain is Protein dip1 (dip1) from Schizosaccharomyces pombe (strain 972 / ATCC 24843) (Fission yeast).